Here is a 747-residue protein sequence, read N- to C-terminus: Catalase-peroxidase 1 (747 aa).

Residues 1-22 (MTDTSDARPPHSDDKTRSHSES) are compositionally biased toward basic and acidic residues. Residues 1 to 39 (MTDTSDARPPHSDDKTRSHSESENPAIDSPEPKVHAPLT) are disordered. Positions 112–240 (WHAAGTYRIF…FGATTMGLIY (129 aa)) form a cross-link, tryptophyl-tyrosyl-methioninium (Trp-Tyr) (with M-266). His-113 (proton acceptor) is an active-site residue. The segment at residues 240 to 266 (YVNPEGPEGKPDPLAAAHDIRETFGRM) is a cross-link (tryptophyl-tyrosyl-methioninium (Tyr-Met) (with W-112)). Residue His-281 participates in heme b binding.

This sequence belongs to the peroxidase family. Peroxidase/catalase subfamily. Homodimer or homotetramer. The cofactor is heme b. Post-translationally, formation of the three residue Trp-Tyr-Met cross-link is important for the catalase, but not the peroxidase activity of the enzyme.

It catalyses the reaction H2O2 + AH2 = A + 2 H2O. The enzyme catalyses 2 H2O2 = O2 + 2 H2O. Functionally, bifunctional enzyme with both catalase and broad-spectrum peroxidase activity. The protein is Catalase-peroxidase 1 of Mycolicibacterium vanbaalenii (strain DSM 7251 / JCM 13017 / BCRC 16820 / KCTC 9966 / NRRL B-24157 / PYR-1) (Mycobacterium vanbaalenii).